A 983-amino-acid polypeptide reads, in one-letter code: MSRATAVSRLARAARAAAAARRHHAGGRDPLRALASLAGDASASAGGGARRPAWFAPPMGRLGGGGLLVPPPPPQRRLFHPTQAARYSTSSSSQITPGEFTEMAWEGVVGAVDAARMSKQQVVEAEHLMKALLEQKDGLARRIFSKAGIDNTSVLQATDEFISRQPKVVGDTSGPIIGSSFVSILDNARKHKKEYADEFVSVEHILRAFTEDKRFGQQLFRDLKIGENELKEAISAVRGSQRVTDQNPEGKYQALEKYGIDMTELARRGKLDPVIGRDDEVRRCIQILCRRTKNNPVIIGEPGVGKTAIAEGLAQRIVRGDVPEPLQNRKLISLDMGALLAGAKFQGQFEERLKAVLKEITASNGQIILFIDEIHTIVGAGAAGGAMDAGNLLKPMLGRGELRCIGATTLDEYRKYIEKDAALERRFQQVYCGEPAVEDTISILRGLRERYELHHGVKISDGALVSAAVLSDRYITGRFLPDKAIDLVDEAAAKLKMEITSKPIELDEVDREIIRLEMEKLSLKNDTDKASKQRLSKLEADLESLKQKQKNLSEHWEYEKSLMTRIRSIKEETDRVNLEIEAAEREYDLNRAAELKYGTLLSLQKQLEEAENKLMEFQQSGKSMLREEVTDVDIAEIVSKWTGIPVSNLQQSEKEKLLLLEDVLHKRVIGQDIAVKSVANAIRRSRAGLSDPNRPIASLMFMGPTGVGKTELGKTLAEFLFNTENALIRIDMSEYMEKHAVSRLVGAPPGYIGYGEGGQLTEAVRRRPYSVVLFDEIEKAHQDVFNILLQLLDDGRITDSQGRTVSFTNCVIIMTSNIGSPLILDTLRNTSDSKEAVYEIMKKQVIDMARQSFRPEFLNRIDEYIVFQPLDTTEINRIVEIQLNRVKNRLRQQKIHLQYTPEAVEHLGSLGFDPNYGARPVKRVIQQMVENEIALSVLKGDFKEDDTVLVDVSSVAIAKGLAPQKKLVLQRLENANLELVAND.

Residues 1-87 (MSRATAVSRL…LFHPTQAARY (87 aa)) constitute a mitochondrion transit peptide. Positions 97-240 (PGEFTEMAWE…KEAISAVRGS (144 aa)) constitute a Clp R domain. Repeat stretches follow at residues 100 to 165 (FTEM…ISRQ) and 177 to 240 (IGSS…VRGS). The tract at residues 255-503 (LEKYGIDMTE…KLKMEITSKP (249 aa)) is i. ATP is bound at residue 300-307 (GEPGVGKT). A coiled-coil region spans residues 504–627 (IELDEVDREI…QQSGKSMLRE (124 aa)). Residues 629–820 (VTDVDIAEIV…VIIMTSNIGS (192 aa)) form an II region. 703–710 (GPTGVGKT) is an ATP binding site.

This sequence belongs to the ClpA/ClpB family.

Its subcellular location is the mitochondrion. Functionally, molecular chaperone that may not be involved in heat stress response or tolerance. The protein is Chaperone protein ClpB3, mitochondrial (CLPB3) of Oryza sativa subsp. japonica (Rice).